An 855-amino-acid chain; its full sequence is DNA mismatch repair protein MutS (855 aa).

613–620 serves as a coordination point for ATP; that stretch reads GPNMGGKS. Residues 795-816 form a disordered region; the sequence is ETTSLPHEVPSQQSGKPASPMQ. Residues 796 to 816 show a composition bias toward polar residues; sequence TTSLPHEVPSQQSGKPASPMQ.

The protein belongs to the DNA mismatch repair MutS family.

Its function is as follows. This protein is involved in the repair of mismatches in DNA. It is possible that it carries out the mismatch recognition step. This protein has a weak ATPase activity. This chain is DNA mismatch repair protein MutS, found in Pseudomonas paraeruginosa (strain DSM 24068 / PA7) (Pseudomonas aeruginosa (strain PA7)).